The chain runs to 138 residues: Small ribosomal subunit protein uS11c (138 aa).

It belongs to the universal ribosomal protein uS11 family. In terms of assembly, part of the 30S ribosomal subunit.

Its subcellular location is the plastid. The protein resides in the chloroplast. The protein is Small ribosomal subunit protein uS11c of Acorus calamus (Sweet flag).